We begin with the raw amino-acid sequence, 210 residues long: MVIAIDGPAASGKGTLARRLAQHYGLPHLDTGLLYRAVALALLDAERDLRDEAAAEAAARTLRAESLGDARLRERAMGEAASLVSALPAVRAALLDWQRRFAAAPGGAVLDGRDIGTVVCPDAPVKLFITASPEERAHRRHRELGGRGEPVAFEAVLADIVRRDARDADRAAAPLRVADDAVVIDTTALDAEAAFRAAAAVVEARWPGRG.

7 to 15 (GPAASGKGT) is an ATP binding site.

The protein belongs to the cytidylate kinase family. Type 1 subfamily.

It localises to the cytoplasm. The enzyme catalyses CMP + ATP = CDP + ADP. It catalyses the reaction dCMP + ATP = dCDP + ADP. The chain is Cytidylate kinase from Methylobacterium sp. (strain 4-46).